A 119-amino-acid polypeptide reads, in one-letter code: Beta-2-microglobulin (119 aa).

A signal peptide spans 1–20 (MARFVVVALLVLLSLSGLEA). Positions 25-114 (PKIQVYSRHP…VTLSTPKTVK (90 aa)) constitute an Ig-like C1-type domain. Cys-45 and Cys-100 are oxidised to a cystine.

Belongs to the beta-2-microglobulin family. In terms of assembly, heterodimer of an alpha chain and a beta chain. Beta-2-microglobulin is the beta-chain of major histocompatibility complex class I molecules.

It is found in the secreted. In terms of biological role, component of the class I major histocompatibility complex (MHC). Involved in the presentation of peptide antigens to the immune system. This Aotus lemurinus (Gray-bellied night monkey) protein is Beta-2-microglobulin (B2M).